The sequence spans 294 residues: Dof zinc finger protein DOF4.1 (294 aa).

Residues 68–122 (RNCPRCNSSNTKFCYYNNYSLAQPRYLCKSCRRYWTEGGSLRNVPVGGGSRKNKK) form a Dof-type zinc finger. Residues cysteine 70, cysteine 73, cysteine 95, and cysteine 98 each coordinate Zn(2+). 2 disordered regions span residues 109–178 (RNVP…DKRA) and 247–294 (MYPY…GPTW). Composition is skewed to polar residues over residues 126-136 (PNSSTSSSTKN) and 157-173 (KTHQNNNDLSLSFSSPM). A compositionally biased stretch (basic and acidic residues) spans 251-273 (GDHEDRQQHHHVRHDDGNKKREG). Positions 284–294 (ILGGDSGGPTW) are enriched in gly residues.

It localises to the nucleus. Transcription factor that binds specifically to a 5'-AA[AG]G-3' consensus core sequence. This is Dof zinc finger protein DOF4.1 (DOF4.1) from Arabidopsis thaliana (Mouse-ear cress).